The primary structure comprises 61 residues: Defensin-like peptide TXKs2 (61 aa).

The N-terminal stretch at 1–19 (MTYAILIIVSLLLISDRIS) is a signal peptide. Residues 20 to 22 (NVV) constitute a propeptide that is removed on maturation. Intrachain disulfides connect Cys-26–Cys-47, Cys-33–Cys-56, and Cys-37–Cys-58.

The protein belongs to the invertebrate defensin family. As to expression, expressed by the venom gland.

Its subcellular location is the secreted. Functionally, antibacterial protein. This chain is Defensin-like peptide TXKs2, found in Olivierus martensii (Manchurian scorpion).